A 470-amino-acid chain; its full sequence is Uronate isomerase (470 aa).

The protein belongs to the metallo-dependent hydrolases superfamily. Uronate isomerase family.

The catalysed reaction is D-glucuronate = D-fructuronate. It carries out the reaction aldehydo-D-galacturonate = keto-D-tagaturonate. Its pathway is carbohydrate metabolism; pentose and glucuronate interconversion. The chain is Uronate isomerase from Salmonella agona (strain SL483).